Here is a 183-residue protein sequence, read N- to C-terminus: MTTKPKTLEIDNNTFLLLEGNLKRIFATPIGYTTFREFQNVVFNCAQGQQELANFLFEMLINGKLLQELPAGQKQSAQSLIVQFMMPIRVAKDIHERGEFINFITSDMLAQQERCVFLNRLSRVDGQEFLLMTDVQNTCHLIRHLLSRLLEAQKNPIGEKNLQEIQEDLDSLRAHFEELTKSV.

It belongs to the chlamydial CPn_0803/CT_584/TC_0873 family.

This is Protein CT_584 from Chlamydia trachomatis serovar D (strain ATCC VR-885 / DSM 19411 / UW-3/Cx).